The primary structure comprises 323 residues: o-succinylbenzoate synthase (323 aa).

The active-site Proton donor is lysine 134. Mg(2+) contacts are provided by aspartate 162, glutamate 191, and aspartate 214. Lysine 236 functions as the Proton acceptor in the catalytic mechanism.

Belongs to the mandelate racemase/muconate lactonizing enzyme family. MenC type 1 subfamily. It depends on a divalent metal cation as a cofactor.

It carries out the reaction (1R,6R)-6-hydroxy-2-succinyl-cyclohexa-2,4-diene-1-carboxylate = 2-succinylbenzoate + H2O. It functions in the pathway quinol/quinone metabolism; 1,4-dihydroxy-2-naphthoate biosynthesis; 1,4-dihydroxy-2-naphthoate from chorismate: step 4/7. It participates in quinol/quinone metabolism; menaquinone biosynthesis. Functionally, converts 2-succinyl-6-hydroxy-2,4-cyclohexadiene-1-carboxylate (SHCHC) to 2-succinylbenzoate (OSB). This chain is o-succinylbenzoate synthase, found in Yersinia pseudotuberculosis serotype I (strain IP32953).